Reading from the N-terminus, the 70-residue chain is Large ribosomal subunit protein bL31 (70 aa).

Positions 16, 18, 37, and 40 each coordinate Zn(2+).

It belongs to the bacterial ribosomal protein bL31 family. Type A subfamily. As to quaternary structure, part of the 50S ribosomal subunit. Zn(2+) is required as a cofactor.

Binds the 23S rRNA. The sequence is that of Large ribosomal subunit protein bL31 from Shewanella sediminis (strain HAW-EB3).